The sequence spans 58 residues: UPF0391 membrane protein VP0082 (58 aa).

2 consecutive transmembrane segments (helical) span residues 4–24 (WMFI…SGIA) and 30–50 (VAQV…VFVI).

This sequence belongs to the UPF0391 family.

The protein resides in the cell membrane. This chain is UPF0391 membrane protein VP0082, found in Vibrio parahaemolyticus serotype O3:K6 (strain RIMD 2210633).